Here is a 406-residue protein sequence, read N- to C-terminus: Lysosome-associated membrane glycoprotein 1 (406 aa).

The first 24 residues, 1–24, serve as a signal peptide directing secretion; it reads MAAPGARRPLLLLLLAGLAHGASA. A first lumenal domain region spans residues 25-188; the sequence is LFEVKNNGTT…SKEETHCTQD (164 aa). Over 25–370 the chain is Lumenal; the sequence is LFEVKNNGTT…VEECVQDGNN (346 aa). Residues Asn-31, Asn-52, Asn-58, Asn-70, Asn-78, Asn-97, Asn-101, Asn-115, Asn-159, and Asn-177 are each glycosylated (N-linked (GlcNAc...) asparagine). A disulfide bond links Cys-35 and Cys-74. Cys-149 and Cys-185 are joined by a disulfide. The segment at 180–207 is disordered; the sequence is KEETHCTQDGPSPTTGPPSPSPPLVPTN. The interval 189 to 218 is hinge; the sequence is GPSPTTGPPSPSPPLVPTNPTVSKYNVTGN. A compositionally biased stretch (pro residues) spans 193 to 205; it reads TTGPPSPSPPLVP. N-linked (GlcNAc...) asparagine glycosylation is found at Asn-214, Asn-219, Asn-232, and Asn-240. Residues 219-370 are second lumenal domain; sequence NGTCLLASMA…VEECVQDGNN (152 aa). A disulfide bridge links Cys-222 with Cys-259. A glycan (N-linked (GlcNAc...) (high mannose) asparagine) is linked at Asn-252. Asn-282, Asn-296, and Asn-311 each carry an N-linked (GlcNAc...) asparagine glycan. An intrachain disulfide couples Cys-327 to Cys-364. Residues 371-394 form a helical membrane-spanning segment; the sequence is MLIPIAVGGALAGLVLIVLIAYLI. At 395 to 406 the chain is on the cytoplasmic side; that stretch reads GRKRSHAGYQTI.

It belongs to the LAMP family. Interacts with ABCB9; this interaction strongly stabilizes ABCB9 and protects ABCB9 against lysosomal degradation. Interacts with FURIN. Interacts with TMEM175; inhibiting the proton channel activity of TMEM175. Post-translationally, O- and N-glycosylated; some of the N-glycans attached to LAMP-1 are polylactosaminoglycans.

The protein resides in the lysosome membrane. It is found in the endosome membrane. It localises to the late endosome membrane. The protein localises to the cell membrane. Its subcellular location is the cytolytic granule membrane. Lysosomal membrane glycoprotein which plays an important role in lysosome biogenesis, lysosomal pH regulation, autophagy and cholesterol homeostasis. Acts as an important regulator of lysosomal lumen pH regulation by acting as a direct inhibitor of the proton channel TMEM175, facilitating lysosomal acidification for optimal hydrolase activity. Also plays an important role in NK-cells cytotoxicity. Mechanistically, participates in cytotoxic granule movement to the cell surface and perforin trafficking to the lytic granule. In addition, protects NK-cells from degranulation-associated damage induced by their own cytotoxic granule content. Presents carbohydrate ligands to selectins. Also implicated in tumor cell metastasis. The chain is Lysosome-associated membrane glycoprotein 1 (Lamp1) from Mus musculus (Mouse).